Reading from the N-terminus, the 671-residue chain is MSELLDLSFLSEEEKDLILSVLQRDEEVRKADEKRIRRLKNELLEIKRKGAKRGSQHYSDRTCARCQESLGRLSPKTNTCRGCNHLVCRDCRIQESNGTWRCKVCAKEIELKKATGDWFYDQKVNRFAYRTGSEIIRMSLRHKPAVSKRETVGQSLLHQTQMGDIWPGRKIIQERQKEPSVLFEVPKLKSGKSALEAESESLDSFTADSDSTSRRDSLDKSGLFPEWKKMSAPKSQVEKETQPGGQNVVFVDEGEMIFKKNTRKILRPSEYTKSVIDLRPEDVVHESGSLGDRSKSVPGLNVDMEEEEEEEDIDHLVKLHRQKLARSSMQSGSSMSTIGSMMSIYSEAGDFGNIFVTGRIAFSLKYEQQTQSLVVHVKECHQLAYADEAKKRSNPYVKTYLLPDKSRQGKRKTSIKRDTINPLYDETLRYEIPESLLAQRTLQFSVWHHGRFGRNTFLGEAEIQMDSWKLDKKLDHCLPLHGKISAESPTGLPSHKGELVVSLKYIPASKTPVGGDRKKSKGGEGGELQVWIKEAKNLTAAKAGGTSDSFVKGYLLPMRNKASKRKTPVMKKTLNPHYNHTFVYNGVRLEDLQHMCLELTVWDREPLASNDFLGGVRLGVGTGISNGEVVDWMDSTGEEVSLWQKMRQYPGSWAEGTLQLRSSMAKQKLGL.

The RabBD domain maps to 4-122 (LLDLSFLSEE…KATGDWFYDQ (119 aa)). Residues 63 to 105 (CARCQESLGRLSPKTNTCRGCNHLVCRDCRIQESNGTWRCKVC) form an FYVE-type zinc finger. The disordered stretch occupies residues 199–243 (SESLDSFTADSDSTSRRDSLDKSGLFPEWKKMSAPKSQVEKETQP). Phosphoserine is present on residues Ser-201, Ser-204, Ser-217, Ser-221, Ser-274, and Ser-289. In terms of domain architecture, C2 1 spans 356-478 (VTGRIAFSLK…KLDKKLDHCL (123 aa)). Residue Ser-488 is modified to Phosphoserine. The region spanning 507–633 (PASKTPVGGD…ISNGEVVDWM (127 aa)) is the C2 2 domain.

In terms of assembly, part of a ternary complex containing STX1A and RAB27A. Can bind both dominant negative and dominant active mutants of RAB27A. Binds STXBP1, RAB3A, RAB8A and RAB27B. Interacts with MYO5A.

Its subcellular location is the membrane. The protein localises to the cell membrane. The protein resides in the cytoplasmic vesicle. It is found in the secretory vesicle membrane. Functionally, modulates exocytosis of dense-core granules and secretion of hormones in the pancreas and the pituitary. Interacts with vesicles containing negatively charged phospholipids in a Ca(2+)-independent manner. This Homo sapiens (Human) protein is Synaptotagmin-like protein 4 (SYTL4).